The primary structure comprises 687 residues: Putative lipase YDR444W (687 aa).

The active-site Charge relay system is the serine 284. Disordered regions lie at residues 429–472 (IRKK…AESP), 491–513 (KINK…EQGV), and 650–687 (ELAE…ENAT). The segment covering 436–463 (SPTSSEFVSSDSPESSGASSPSNENGNN) has biased composition (low complexity). A compositionally biased stretch (basic and acidic residues) spans 670–681 (RSNEYNEGEISK).

It belongs to the putative lipase ROG1 family.

The protein localises to the cytoplasm. In Saccharomyces cerevisiae (strain ATCC 204508 / S288c) (Baker's yeast), this protein is Putative lipase YDR444W.